The chain runs to 533 residues: MYLSIIILPLLGSIVAGFFGRKVGVSGAQLITCLSVIITTGLAILAFFEVGFNNIPVTINLFRWIDSEWYNILWGFQFDSLTVAMLIPVLIISSLVHIYSISYMSHDPRGRVRGKRVYGDKLSNSGEVLKLKVPSCSWKTMSGWSNYSGTVTSLKMSENKMDNRGSKSVVIDSNSTVKEQRVDGSWSIKSHLMDLRCTLRGFERNRGIKLGFNLQQGWNSAKIPSKQFDFKKKFSTYNSTLRVNPWVWSGLIDGEGSFNIIVDRNKSRKLGWRAQLKFQLSLHTKDLNLLYLLQQYLGGIGSIHLARNRDIVNYSIDSIEDLNKLIIHLENYPLLTQKAADFFLFKQAVKLVNNKAHLTVEGLNQIVNIKASMNLGLSDTLKSEFAGYTPVERPVINCDNVFLDPYWISGFVSAEGNFDVRMPSTNSKLGYRVQLRFRISTLRVDIRLMEKIVEYFGSGKIYKYGGKSAVSLTIVDFTDITNILVPFFNKYPIIGIKLYDYLDWCKIHSLMINRSHLTVEGINSISLLLGRRR.

Helical transmembrane passes span 1 to 21 (MYLSIIILPLLGSIVAGFFGR), 30 to 50 (LITCLSVIITTGLAILAFFEV), and 81 to 101 (LTVAMLIPVLIISSLVHIYSI). The tract at residues 1–108 (MYLSIIILPL…YSISYMSHDP (108 aa)) is ndh-5 exon 1 encoded. Residues 109–533 (RGRVRGKRVY…SISLLLGRRR (425 aa)) are ndh-5 intron 1 encoded.

This sequence in the N-terminal section; belongs to the complex I subunit 5 family. The protein in the C-terminal section; belongs to the LAGLIDADG endonuclease family.

It is found in the mitochondrion membrane. Functionally, mitochondrial DNA endonuclease involved in intron homing. The sequence is that of Probable intron-encoded endonuclease 3 from Neurospora crassa (strain ATCC 24698 / 74-OR23-1A / CBS 708.71 / DSM 1257 / FGSC 987).